The sequence spans 351 residues: Histidine protein kinase SaeS (351 aa).

2 consecutive transmembrane segments (helical) span residues 9 to 29 (IIIG…IAYI) and 40 to 60 (TLTL…SIFI). The HAMP domain occupies 61–114 (NPLIQKIKQFNIKTKQFANGNYASNDKTFNSPKEIYELNQSFNKMASEITQQMN). The 220-residue stretch at 129–348 (NLAHDLKTPL…TMTVTLHKLD (220 aa)) folds into the Histidine kinase domain. A Phosphohistidine; by autocatalysis modification is found at His-132.

Post-translationally, autophosphorylated.

It localises to the cell membrane. The enzyme catalyses ATP + protein L-histidine = ADP + protein N-phospho-L-histidine.. In terms of biological role, member of the two-component regulatory system SaeR/SaeS involved in the regulation of staphylococcal virulence factors in a strain-dependent fashion. Probably functions as a membrane-associated protein kinase that upon sensing the appropriate signal, autophosphorylates and in turn activates the cytosolic response regulator SaeR. The sequence is that of Histidine protein kinase SaeS (saeS) from Staphylococcus aureus (strain MRSA252).